The chain runs to 591 residues: Alpha-(1-&gt;6)-mannopyranosyltransferase Rv1459c (591 aa).

The next 13 membrane-spanning stretches (helical) occupy residues 40-60, 80-100, 117-137, 201-221, 235-255, 259-279, 321-341, 367-387, 408-428, 441-461, 473-493, 502-522, and 527-547; these read FGAT…ARPV, VSLT…LMLG, TLLL…KDVY, IVAA…LIVW, VSAL…VAGI, ALML…LDMA, EWGP…SSQV, LLLA…ILGW, WMSP…LLGL, AIGV…VLRG, LAVT…WAII, PGFR…GPTA, and FALF…ILLI. Residues 569–591 form a disordered region; it reads ESASKTPATRRPTAAPDAYADST. Residues 574–584 are compositionally biased toward low complexity; it reads TPATRRPTAAP.

The protein belongs to the MptA/B family.

It localises to the membrane. Its function is as follows. Catalyzes the addition of alpha-(1-&gt;6)-mannose residue. This chain is Alpha-(1-&gt;6)-mannopyranosyltransferase Rv1459c, found in Mycobacterium tuberculosis (strain ATCC 25618 / H37Rv).